Here is a 204-residue protein sequence, read N- to C-terminus: MIAQLKGSLAAKHPDHVVMDVHGVGYRVFISLATYNELPTVGEACLLYTVTHVREDAFLLYGFHSESQRKVFNLLTSVNGIGTKLALAALSSHTPEALLTALSREDLTLLCTIPGVGKKTAQRMAMELKDKLGALPMAAPTTAIGAATMAANPAGLREEVASALLNLGYKPPQVDAALAKLFSAGEITDISVALKGALKLLAPA.

The segment at methionine 1–histidine 64 is domain I. The segment at serine 65–alanine 143 is domain II. The flexible linker stretch occupies residues isoleucine 144–alanine 154. Positions alanine 154 to alanine 204 are domain III.

This sequence belongs to the RuvA family. Homotetramer. Forms an RuvA(8)-RuvB(12)-Holliday junction (HJ) complex. HJ DNA is sandwiched between 2 RuvA tetramers; dsDNA enters through RuvA and exits via RuvB. An RuvB hexamer assembles on each DNA strand where it exits the tetramer. Each RuvB hexamer is contacted by two RuvA subunits (via domain III) on 2 adjacent RuvB subunits; this complex drives branch migration. In the full resolvosome a probable DNA-RuvA(4)-RuvB(12)-RuvC(2) complex forms which resolves the HJ.

It is found in the cytoplasm. Functionally, the RuvA-RuvB-RuvC complex processes Holliday junction (HJ) DNA during genetic recombination and DNA repair, while the RuvA-RuvB complex plays an important role in the rescue of blocked DNA replication forks via replication fork reversal (RFR). RuvA specifically binds to HJ cruciform DNA, conferring on it an open structure. The RuvB hexamer acts as an ATP-dependent pump, pulling dsDNA into and through the RuvAB complex. HJ branch migration allows RuvC to scan DNA until it finds its consensus sequence, where it cleaves and resolves the cruciform DNA. The protein is Holliday junction branch migration complex subunit RuvA of Magnetococcus marinus (strain ATCC BAA-1437 / JCM 17883 / MC-1).